The primary structure comprises 93 residues: Protein FMP16, mitochondrial (93 aa).

A mitochondrion-targeting transit peptide spans 1–25; sequence MLRTTFLRTPRQLMRKSPRASFSIV. The tract at residues 30-93 is disordered; sequence FPHLKNNQDE…EQNRPDDGVY (64 aa). The span at 35–93 shows a compositional bias: basic and acidic residues; it reads NNQDEAEKKEQGLFDSNKKRLDTLEHGKNPDYKQPGMEDLKKKGDDARIEQNRPDDGVY.

The protein localises to the mitochondrion. In Saccharomyces cerevisiae (strain ATCC 204508 / S288c) (Baker's yeast), this protein is Protein FMP16, mitochondrial (FMP16).